The sequence spans 324 residues: Malate dehydrogenase (324 aa).

NAD(+) contacts are provided by residues 20–25 (GAGNVG) and D44. R93 and R99 together coordinate substrate. NAD(+) contacts are provided by residues N106 and 129-131 (VTN). Substrate contacts are provided by N131 and R162. H186 (proton acceptor) is an active-site residue.

It belongs to the LDH/MDH superfamily. MDH type 3 family.

It catalyses the reaction (S)-malate + NAD(+) = oxaloacetate + NADH + H(+). Functionally, catalyzes the reversible oxidation of malate to oxaloacetate. The chain is Malate dehydrogenase from Synechocystis sp. (strain ATCC 27184 / PCC 6803 / Kazusa).